We begin with the raw amino-acid sequence, 476 residues long: Ankyrin repeat, SAM and basic leucine zipper domain-containing protein 1 (476 aa).

2 positions are modified to phosphoserine: serine 18 and serine 21. 6 ANK repeats span residues 46–75 (EKNE…SIDS), 79–108 (YGWT…NASF), 111–145 (DKQT…DPNV), 149–178 (RLMT…EVNT), 182–211 (NGYT…DKML), and 215–244 (DGKT…PLEG). The SAM domain occupies 273–335 (SYAAFEDLEI…KILAALKELE (63 aa)).

As to quaternary structure, interacts with DDX4, PIWIL1, RANBP9 and TDRD1.

The protein localises to the cytoplasm. Plays a central role during spermatogenesis by repressing transposable elements and preventing their mobilization, which is essential for the germline integrity. Acts via the piRNA metabolic process, which mediates the repression of transposable elements during meiosis by forming complexes composed of piRNAs and Piwi proteins and governs the methylation and subsequent repression of transposons. Its association with pi-bodies suggests a participation in the primary piRNAs metabolic process. Required prior to the pachytene stage to facilitate the production of multiple types of piRNAs, including those associated with repeats involved in the regulation of retrotransposons. May act by mediating protein-protein interactions during germ cell maturation. The sequence is that of Ankyrin repeat, SAM and basic leucine zipper domain-containing protein 1 (ASZ1) from Dasypus novemcinctus (Nine-banded armadillo).